We begin with the raw amino-acid sequence, 296 residues long: NAD kinase (296 aa).

Asp-72 acts as the Proton acceptor in catalysis. NAD(+) contacts are provided by residues 72–73, 146–147, Arg-157, Lys-174, Asp-176, 187–192, and Gln-247; these read DG, ND, and TAYALS.

Belongs to the NAD kinase family. A divalent metal cation is required as a cofactor.

Its subcellular location is the cytoplasm. It carries out the reaction NAD(+) + ATP = ADP + NADP(+) + H(+). Functionally, involved in the regulation of the intracellular balance of NAD and NADP, and is a key enzyme in the biosynthesis of NADP. Catalyzes specifically the phosphorylation on 2'-hydroxyl of the adenosine moiety of NAD to yield NADP. In Pseudomonas putida (strain GB-1), this protein is NAD kinase.